We begin with the raw amino-acid sequence, 561 residues long: MGMPPLLFCWVSFVLPLFVAAGNCTDVYMHHEMISEGQPFPFNCTYPPVTNGAVNLTWHRTPSKSPISINRHVRIHQDQSWILFLPLALEDSGIYQCVIKDAHSCYRIAINLTVFRKHWCDSSNEESSINSSDEYQQWLPIGKSGSLTCHLYFPESCVLDSIKWYKGCEEIKVSKKFCPTGTKLLVNNIDVEDSGSYACSARLTHLGRIFTVRNYIAVNTKEVGSGGRIPNITYPKNNSIEVQLGSTLIVDCNITDTKENTNLRCWRVNNTLVDDYYNDFKRIQEGIETNLSLRNHILYTVNITFLEVKMEDYGHPFTCHAAVSAAYIILKRPAPDFRAYLIGGLMAFLLLAVSILYIYNTFKVDIVLWYRSTFHTAQAPDDEKLYDAYVLYPKYPRESQGHDVDTLVLKILPEVLEKQCGYKLFIFGRDEFPGQAVASVIDENIKLCRRLMVLVAPETSSFSFLKNLTEEQIAVYNALVQDGMKVILIELERVKDYSTMPESIQYIRQKHGAIQWDGDFTEQAQCAKTKFWKKVRYHMPPRRYPASPPVQLLGHTPRIPG.

Residues 1-21 form the signal peptide; the sequence is MGMPPLLFCWVSFVLPLFVAA. 3 Ig-like C2-type domains span residues 22–113, 128–215, and 225–321; these read GNCT…INLT, SINS…VRNY, and SGGR…TCHA. The Extracellular portion of the chain corresponds to 22–338; sequence GNCTDVYMHH…ILKRPAPDFR (317 aa). Residues asparagine 23, asparagine 43, asparagine 55, asparagine 111, and asparagine 130 are each glycosylated (N-linked (GlcNAc...) asparagine). Cysteine 44 and cysteine 97 are disulfide-bonded. Residues cysteine 149 and cysteine 199 are joined by a disulfide bond. 6 N-linked (GlcNAc...) asparagine glycosylation sites follow: asparagine 231, asparagine 237, asparagine 253, asparagine 269, asparagine 290, and asparagine 302. Cysteine 252 and cysteine 319 are joined by a disulfide. The chain crosses the membrane as a helical span at residues 339–358; the sequence is AYLIGGLMAFLLLAVSILYI. The Cytoplasmic portion of the chain corresponds to 359 to 561; that stretch reads YNTFKVDIVL…LLGHTPRIPG (203 aa). Positions 384 to 539 constitute a TIR domain; sequence KLYDAYVLYP…KFWKKVRYHM (156 aa). Glutamate 470 is a catalytic residue.

This sequence belongs to the interleukin-1 receptor family. As to quaternary structure, interacts with IL1RAP; the association is enhanced by IL36B indicative for an functional signaling complex and inhibited by IL36RN. Predominant expression in the lung and epididymis, with lower expression in cerebral cortex and testis. Expression in the brain is non-neuronal and associated with the cerebral vasculature. Not detected in any cell line tested.

It localises to the membrane. It carries out the reaction NAD(+) + H2O = ADP-D-ribose + nicotinamide + H(+). In terms of biological role, receptor for interleukin-36 (IL36A, IL36B and IL36G). After binding to interleukin-36 associates with the coreceptor IL1RAP to form the interleukin-36 receptor complex which mediates interleukin-36-dependent activation of NF-kappa-B, MAPK and other pathways. The IL-36 signaling system is thought to be present in epithelial barriers and to take part in local inflammatory response; it is similar to the IL-1 system. Seems to be involved in skin inflammatory response by induction of the IL-23/IL-17/IL-22 pathway. Receptor for the interleukin IL36G. Binding to the agonist leads to the activation of NF-kappa-B. The polypeptide is Interleukin-1 receptor-like 2 (Il1rl2) (Rattus norvegicus (Rat)).